The following is a 452-amino-acid chain: UDP-N-acetylmuramoylalanine--D-glutamate ligase (452 aa).

115 to 121 lines the ATP pocket; that stretch reads GTNGKTT.

The protein belongs to the MurCDEF family.

It localises to the cytoplasm. The enzyme catalyses UDP-N-acetyl-alpha-D-muramoyl-L-alanine + D-glutamate + ATP = UDP-N-acetyl-alpha-D-muramoyl-L-alanyl-D-glutamate + ADP + phosphate + H(+). The protein operates within cell wall biogenesis; peptidoglycan biosynthesis. Functionally, cell wall formation. Catalyzes the addition of glutamate to the nucleotide precursor UDP-N-acetylmuramoyl-L-alanine (UMA). The sequence is that of UDP-N-acetylmuramoylalanine--D-glutamate ligase from Geobacter sp. (strain M21).